A 258-amino-acid chain; its full sequence is Ubiquinone/menaquinone biosynthesis C-methyltransferase UbiE (258 aa).

S-adenosyl-L-methionine contacts are provided by residues threonine 81, aspartate 102, and 130 to 131 (NA).

This sequence belongs to the class I-like SAM-binding methyltransferase superfamily. MenG/UbiE family.

The catalysed reaction is a 2-demethylmenaquinol + S-adenosyl-L-methionine = a menaquinol + S-adenosyl-L-homocysteine + H(+). The enzyme catalyses a 2-methoxy-6-(all-trans-polyprenyl)benzene-1,4-diol + S-adenosyl-L-methionine = a 5-methoxy-2-methyl-3-(all-trans-polyprenyl)benzene-1,4-diol + S-adenosyl-L-homocysteine + H(+). Its pathway is quinol/quinone metabolism; menaquinone biosynthesis; menaquinol from 1,4-dihydroxy-2-naphthoate: step 2/2. It functions in the pathway cofactor biosynthesis; ubiquinone biosynthesis. Its function is as follows. Methyltransferase required for the conversion of demethylmenaquinol (DMKH2) to menaquinol (MKH2) and the conversion of 2-polyprenyl-6-methoxy-1,4-benzoquinol (DDMQH2) to 2-polyprenyl-3-methyl-6-methoxy-1,4-benzoquinol (DMQH2). The chain is Ubiquinone/menaquinone biosynthesis C-methyltransferase UbiE from Rhizobium meliloti (strain 1021) (Ensifer meliloti).